A 353-amino-acid polypeptide reads, in one-letter code: Photosystem II D2 protein (353 aa).

T2 is subject to N-acetylthreonine. T2 carries the post-translational modification Phosphothreonine. Residues 41 to 61 (CAYFALGGWFTGTTFVTSWYT) traverse the membrane as a helical segment. Chlorophyll a is bound at residue H118. The chain crosses the membrane as a helical span at residues 125-141 (GFMLRQFELARSVQLRP). The pheophytin a site is built by Q130 and N143. Residues 153-166 (VFVSVFLIYPLGQS) form a helical membrane-spanning segment. H198 serves as a coordination point for chlorophyll a. Residues 208–228 (AALLCAIHGATVENTLFEDGD) form a helical membrane-spanning segment. Residues H215 and F262 each contribute to the a plastoquinone site. A Fe cation-binding site is contributed by H215. H269 lines the Fe cation pocket. The chain crosses the membrane as a helical span at residues 279-295 (GLWMSALGVVGLALNLR).

Belongs to the reaction center PufL/M/PsbA/D family. As to quaternary structure, PSII is composed of 1 copy each of membrane proteins PsbA, PsbB, PsbC, PsbD, PsbE, PsbF, PsbH, PsbI, PsbJ, PsbK, PsbL, PsbM, PsbT, PsbX, PsbY, PsbZ, Psb30/Ycf12, at least 3 peripheral proteins of the oxygen-evolving complex and a large number of cofactors. It forms dimeric complexes. The D1/D2 heterodimer binds P680, chlorophylls that are the primary electron donor of PSII, and subsequent electron acceptors. It shares a non-heme iron and each subunit binds pheophytin, quinone, additional chlorophylls, carotenoids and lipids. There is also a Cl(-1) ion associated with D1 and D2, which is required for oxygen evolution. The PSII complex binds additional chlorophylls, carotenoids and specific lipids. is required as a cofactor.

It is found in the plastid. The protein resides in the chloroplast thylakoid membrane. It catalyses the reaction 2 a plastoquinone + 4 hnu + 2 H2O = 2 a plastoquinol + O2. In terms of biological role, photosystem II (PSII) is a light-driven water:plastoquinone oxidoreductase that uses light energy to abstract electrons from H(2)O, generating O(2) and a proton gradient subsequently used for ATP formation. It consists of a core antenna complex that captures photons, and an electron transfer chain that converts photonic excitation into a charge separation. The D1/D2 (PsbA/PsbD) reaction center heterodimer binds P680, the primary electron donor of PSII as well as several subsequent electron acceptors. D2 is needed for assembly of a stable PSII complex. In Morus indica (Mulberry), this protein is Photosystem II D2 protein.